The primary structure comprises 429 residues: UPF0597 protein BT_2080 (429 aa).

Belongs to the UPF0597 family.

This chain is UPF0597 protein BT_2080, found in Bacteroides thetaiotaomicron (strain ATCC 29148 / DSM 2079 / JCM 5827 / CCUG 10774 / NCTC 10582 / VPI-5482 / E50).